A 67-amino-acid chain; its full sequence is MLCVVTSDNSDFRLTAKADIPIGHKVALKALKAGDTVIKYHEDIGKMVGDAEVGGHVHTHNCKTKRW.

(2R)-sulfolactate sulfo-lyase is composed of a SuyA and a SuyB subunit.

It is found in the cytoplasm. The catalysed reaction is (2R)-3-sulfolactate = sulfite + pyruvate + H(+). Its function is as follows. Together with SuyB, desulfonates sulfolactate to pyruvate and sulfite. In Paracoccus pantotrophus (Thiosphaera pantotropha), this protein is (2R)-sulfolactate sulfo-lyase subunit alpha (suyA).